Here is a 399-residue protein sequence, read N- to C-terminus: Tyrosine--tRNA ligase 2 (399 aa).

A 'HIGH' region motif is present at residues 42–51 (PTAPDLHLGH). Positions 226–230 (KMSKS) match the 'KMSKS' region motif. Residue Lys229 participates in ATP binding. An S4 RNA-binding domain is found at 336-396 (MPVASVLNKA…GKKAFARITL (61 aa)).

Belongs to the class-I aminoacyl-tRNA synthetase family. TyrS type 2 subfamily. Homodimer.

Its subcellular location is the cytoplasm. The catalysed reaction is tRNA(Tyr) + L-tyrosine + ATP = L-tyrosyl-tRNA(Tyr) + AMP + diphosphate + H(+). Catalyzes the attachment of tyrosine to tRNA(Tyr) in a two-step reaction: tyrosine is first activated by ATP to form Tyr-AMP and then transferred to the acceptor end of tRNA(Tyr). The polypeptide is Tyrosine--tRNA ligase 2 (Pseudomonas aeruginosa (strain ATCC 15692 / DSM 22644 / CIP 104116 / JCM 14847 / LMG 12228 / 1C / PRS 101 / PAO1)).